The sequence spans 228 residues: Probable septum site-determining protein MinC (228 aa).

Belongs to the MinC family. In terms of assembly, interacts with MinD and FtsZ.

Functionally, cell division inhibitor that blocks the formation of polar Z ring septums. Rapidly oscillates between the poles of the cell to destabilize FtsZ filaments that have formed before they mature into polar Z rings. Prevents FtsZ polymerization. In Pectobacterium carotovorum subsp. carotovorum (strain PC1), this protein is Probable septum site-determining protein MinC.